We begin with the raw amino-acid sequence, 322 residues long: Transaldolase (322 aa).

The active-site Schiff-base intermediate with substrate is K136.

This sequence belongs to the transaldolase family. Type 1 subfamily. As to quaternary structure, homodimer.

The protein resides in the cytoplasm. The catalysed reaction is D-sedoheptulose 7-phosphate + D-glyceraldehyde 3-phosphate = D-erythrose 4-phosphate + beta-D-fructose 6-phosphate. Its pathway is carbohydrate degradation; pentose phosphate pathway; D-glyceraldehyde 3-phosphate and beta-D-fructose 6-phosphate from D-ribose 5-phosphate and D-xylulose 5-phosphate (non-oxidative stage): step 2/3. Functionally, transaldolase is important for the balance of metabolites in the pentose-phosphate pathway. This chain is Transaldolase, found in Xanthomonas euvesicatoria pv. vesicatoria (strain 85-10) (Xanthomonas campestris pv. vesicatoria).